A 299-amino-acid polypeptide reads, in one-letter code: 33 kDa chaperonin (299 aa).

Cystine bridges form between Cys-238–Cys-240 and Cys-271–Cys-274.

The protein belongs to the HSP33 family. Under oxidizing conditions two disulfide bonds are formed involving the reactive cysteines. Under reducing conditions zinc is bound to the reactive cysteines and the protein is inactive.

It localises to the cytoplasm. Functionally, redox regulated molecular chaperone. Protects both thermally unfolding and oxidatively damaged proteins from irreversible aggregation. Plays an important role in the bacterial defense system toward oxidative stress. The sequence is that of 33 kDa chaperonin from Alkaliphilus oremlandii (strain OhILAs) (Clostridium oremlandii (strain OhILAs)).